The chain runs to 78 residues: Omega-conotoxin-like 2 (78 aa).

The first 22 residues, 1–22, serve as a signal peptide directing secretion; it reads MKLTCVVIVAVLLLTACQLITA. Residues 23–42 constitute a propeptide that is removed on maturation; sequence DDSRGTQKHRSLRSTTKVSK. Disulfide bonds link Cys46/Cys62, Cys53/Cys65, and Cys61/Cys72.

The protein belongs to the conotoxin O1 superfamily. Expressed by the venom duct.

It is found in the secreted. Functionally, omega-conotoxins act at presynaptic membranes, they bind and block voltage-gated calcium channels (Cav). This chain is Omega-conotoxin-like 2, found in Conus striatus (Striated cone).